A 389-amino-acid polypeptide reads, in one-letter code: Alkanesulfonate monooxygenase (389 aa).

The protein belongs to the SsuD family.

The enzyme catalyses an alkanesulfonate + FMNH2 + O2 = an aldehyde + FMN + sulfite + H2O + 2 H(+). Functionally, catalyzes the desulfonation of aliphatic sulfonates. The protein is Alkanesulfonate monooxygenase of Rhizobium etli (strain CIAT 652).